The primary structure comprises 199 residues: Imidazole glycerol phosphate synthase subunit HisH 2 (199 aa).

Positions M1–C199 constitute a Glutamine amidotransferase type-1 domain. The Nucleophile role is filled by C76. Catalysis depends on residues H177 and E179.

As to quaternary structure, heterodimer of HisH and HisF.

It localises to the cytoplasm. It catalyses the reaction 5-[(5-phospho-1-deoxy-D-ribulos-1-ylimino)methylamino]-1-(5-phospho-beta-D-ribosyl)imidazole-4-carboxamide + L-glutamine = D-erythro-1-(imidazol-4-yl)glycerol 3-phosphate + 5-amino-1-(5-phospho-beta-D-ribosyl)imidazole-4-carboxamide + L-glutamate + H(+). It carries out the reaction L-glutamine + H2O = L-glutamate + NH4(+). It functions in the pathway amino-acid biosynthesis; L-histidine biosynthesis; L-histidine from 5-phospho-alpha-D-ribose 1-diphosphate: step 5/9. In terms of biological role, IGPS catalyzes the conversion of PRFAR and glutamine to IGP, AICAR and glutamate. The HisH subunit provides the glutamine amidotransferase activity that produces the ammonia necessary to HisF for the synthesis of IGP and AICAR. The sequence is that of Imidazole glycerol phosphate synthase subunit HisH 2 from Legionella pneumophila subsp. pneumophila (strain Philadelphia 1 / ATCC 33152 / DSM 7513).